Here is a 241-residue protein sequence, read N- to C-terminus: Leucyl/phenylalanyl-tRNA--protein transferase (241 aa).

The protein belongs to the L/F-transferase family.

The protein localises to the cytoplasm. It catalyses the reaction N-terminal L-lysyl-[protein] + L-leucyl-tRNA(Leu) = N-terminal L-leucyl-L-lysyl-[protein] + tRNA(Leu) + H(+). The enzyme catalyses N-terminal L-arginyl-[protein] + L-leucyl-tRNA(Leu) = N-terminal L-leucyl-L-arginyl-[protein] + tRNA(Leu) + H(+). The catalysed reaction is L-phenylalanyl-tRNA(Phe) + an N-terminal L-alpha-aminoacyl-[protein] = an N-terminal L-phenylalanyl-L-alpha-aminoacyl-[protein] + tRNA(Phe). In terms of biological role, functions in the N-end rule pathway of protein degradation where it conjugates Leu, Phe and, less efficiently, Met from aminoacyl-tRNAs to the N-termini of proteins containing an N-terminal arginine or lysine. This chain is Leucyl/phenylalanyl-tRNA--protein transferase, found in Colwellia psychrerythraea (strain 34H / ATCC BAA-681) (Vibrio psychroerythus).